The chain runs to 220 residues: 3-keto-L-gulonate-6-phosphate decarboxylase SgbH (220 aa).

Asp11 provides a ligand contact to substrate. Residues Glu33 and Asp62 each contribute to the Mg(2+) site. Position 192 (Arg192) interacts with substrate.

It belongs to the HPS/KGPDC family. KGPDC subfamily. In terms of assembly, homodimer. Mg(2+) is required as a cofactor.

The enzyme catalyses 3-dehydro-L-gulonate 6-phosphate + H(+) = L-xylulose 5-phosphate + CO2. Its function is as follows. Catalyzes the decarboxylation of 3-keto-L-gulonate-6-P into L-xylulose-5-P. May be involved in the utilization of 2,3-diketo-L-gulonate. The chain is 3-keto-L-gulonate-6-phosphate decarboxylase SgbH (sgbH) from Escherichia coli (strain K12).